We begin with the raw amino-acid sequence, 387 residues long: Protoheme IX farnesyltransferase, mitochondrial (387 aa).

8 consecutive transmembrane segments (helical) span residues 95 to 115 (LTVL…YPGL), 117 to 137 (FNTL…ANAF), 183 to 203 (FLVN…YMGI), 212 to 232 (IVNT…GWAA), 242 to 262 (PGGL…FNAF), 284 to 306 (ALNA…AYIS), 311 to 330 (GPWY…ARAW), and 345 to 365 (FFAS…CHMI).

This sequence belongs to the UbiA prenyltransferase family.

It localises to the mitochondrion membrane. The enzyme catalyses heme b + (2E,6E)-farnesyl diphosphate + H2O = Fe(II)-heme o + diphosphate. In terms of biological role, converts protoheme IX and farnesyl diphosphate to heme O. The chain is Protoheme IX farnesyltransferase, mitochondrial (cox10) from Schizosaccharomyces pombe (strain 972 / ATCC 24843) (Fission yeast).